A 316-amino-acid polypeptide reads, in one-letter code: Olfactory receptor 4N4C (316 aa).

The Cytoplasmic segment spans residues 1-26 (MKIANNTVVTEFILLGLTQSQDIQLL). A helical transmembrane segment spans residues 27 to 47 (VFVLILIFYLIILPGNFLIIF). At 48–56 (TIRSDPGLT) the chain is on the extracellular side. Residues 57–77 (APLYLFLGNLAFLDASYSFIV) traverse the membrane as a helical segment. At 78-99 (APRMLVDFLSEKKVISYRGCIT) the chain is on the cytoplasmic side. C97 and C179 are joined by a disulfide. The helical transmembrane segment at 100–120 (QLFFLHFLGGGEGLLLVVMAF) threads the bilayer. Over 121 to 143 (DRYIAICRPLHCSTVMNPRACYA) the chain is Extracellular. A helical transmembrane segment spans residues 144–164 (MMLALWLGGFVHSIIQVVLIL). Topologically, residues 165 to 204 (RLPFCGPNQLDNFFCDVRQVIKLACTDMFVVELLMVFNSG) are cytoplasmic. A helical transmembrane segment spans residues 205–225 (LMTLLCFLGLLASYAVILCHV). Residues 226 to 243 (RRAASEGKNKAMSTCTTR) are Extracellular-facing. A helical membrane pass occupies residues 244–264 (VIIILLMFGPAIFIYICPFRA). Residues 265-268 (LPAD) are Cytoplasmic-facing. Residues 269–289 (KMVSLFHTVIFPLMNPMIYTL) traverse the membrane as a helical segment. The Extracellular segment spans residues 290–316 (RNQEVKTSMKRLLSRHVVCQVDFIIRN).

The protein belongs to the G-protein coupled receptor 1 family.

It is found in the membrane. In terms of biological role, odorant receptor. The protein is Olfactory receptor 4N4C of Homo sapiens (Human).